The sequence spans 188 residues: Adenine phosphoribosyltransferase (188 aa).

This sequence belongs to the purine/pyrimidine phosphoribosyltransferase family. In terms of assembly, homodimer.

The protein resides in the cytoplasm. The enzyme catalyses AMP + diphosphate = 5-phospho-alpha-D-ribose 1-diphosphate + adenine. Its pathway is purine metabolism; AMP biosynthesis via salvage pathway; AMP from adenine: step 1/1. Functionally, catalyzes a salvage reaction resulting in the formation of AMP, that is energically less costly than de novo synthesis. The sequence is that of Adenine phosphoribosyltransferase from Salinispora tropica (strain ATCC BAA-916 / DSM 44818 / JCM 13857 / NBRC 105044 / CNB-440).